We begin with the raw amino-acid sequence, 732 residues long: Protein kinase YpkA (732 aa).

One can recognise a Protein kinase domain in the interval 136–408 (VAETDKFAEG…SNEARLHEFL (273 aa)). ATP contacts are provided by residues 142–150 (FAEGESHIS) and Lys163. Asp270 (proton acceptor) is an active-site residue.

The protein belongs to the protein kinase superfamily. Ser/Thr protein kinase family.

The protein localises to the secreted. The enzyme catalyses L-seryl-[protein] + ATP = O-phospho-L-seryl-[protein] + ADP + H(+). It catalyses the reaction L-threonyl-[protein] + ATP = O-phospho-L-threonyl-[protein] + ADP + H(+). Functionally, acts as a virulence determinant. This is Protein kinase YpkA (ypkA) from Yersinia pseudotuberculosis serotype I (strain IP32953).